We begin with the raw amino-acid sequence, 414 residues long: uncharacterized protein (414 aa).

Residues 367-384 (TTWALTLICIACILLFFV) traverse the membrane as a helical segment.

It is found in the virion membrane. This is an uncharacterized protein from Human cytomegalovirus (strain Merlin) (HHV-5).